Consider the following 955-residue polypeptide: Serine-aspartate repeat-containing protein C (955 aa).

The first 50 residues, 1 to 50, serve as a signal peptide directing secretion; sequence MNNKKTVTNRKGMIPNRLNKFSIRKYSVGTASILVGTTLIFGLSGHEAKA. Residues 51 to 166 are disordered; that stretch reads AEHTNGELNQ…TPKTTTIKPR (116 aa). Residues 51 to 495 are ligand binding A region; sequence AEHTNGELNQ…GSSTANGDQK (445 aa). The segment covering 56–71 has biased composition (polar residues); it reads GELNQSKNETTAPSEN. The span at 72 to 83 shows a compositional bias: basic and acidic residues; that stretch reads KTTEKVDSHQLK. A compositionally biased stretch (polar residues) spans 84-114; sequence DNTQTATADQPKVTMSDSATFKETSSNMQSP. Low complexity predominate over residues 115 to 132; it reads QNATASQSTTQTSNVTTN. Polar residues predominate over residues 133–164; that stretch reads DKSSTTYSNETDKSNLTQAKDVSATPKTTTIK. CNA-B domains follow at residues 496–606 and 607–717; these read KYNL…YKTP and KYSL…EEET. Residues 678-935 form a disordered region; that stretch reads TQTGTNTTED…NNSNNGTLFG (258 aa). Composition is skewed to acidic residues over residues 685 to 695 and 712 to 894; these read TEDDKDADGGE and YYEE…DSDS. Residues 918–922 carry the LPXTG sorting signal motif; the sequence is LPETG. Over residues 920 to 935 the composition is skewed to low complexity; it reads ETGSENNNSNNGTLFG. T921 bears the Pentaglycyl murein peptidoglycan amidated threonine mark. The propeptide at 922–955 is removed by sortase; sequence GSENNNSNNGTLFGGLFAALGSLLLFGRRKKQNK.

This sequence belongs to the serine-aspartate repeat-containing protein (SDr) family. In terms of assembly, homodimerizes; via N2-Domain. Interacts with host NRXN1; this interaction mediates bacterial attachment to host cells.

It localises to the secreted. Its subcellular location is the cell wall. In terms of biological role, cell surface-associated calcium-binding protein which plays an important role in adhesion and pathogenesis. Mediates interactions with components of the extracellular matrix such as host NRXN1 to promote bacterial adhesion. The protein is Serine-aspartate repeat-containing protein C (sdrC) of Staphylococcus aureus (strain MW2).